The chain runs to 342 residues: S-methyl-5'-thioadenosine phosphorylase (342 aa).

Residues T51, 99–100, and 132–133 contribute to the phosphate site; these read RH and SA. M234 provides a ligand contact to substrate. S235 contacts phosphate. Residue 258–260 coordinates substrate; it reads DYD.

It belongs to the PNP/MTAP phosphorylase family. MTAP subfamily. Homotrimer.

The protein resides in the cytoplasm. The protein localises to the nucleus. The enzyme catalyses S-methyl-5'-thioadenosine + phosphate = 5-(methylsulfanyl)-alpha-D-ribose 1-phosphate + adenine. It functions in the pathway amino-acid biosynthesis; L-methionine biosynthesis via salvage pathway; S-methyl-5-thio-alpha-D-ribose 1-phosphate from S-methyl-5'-thioadenosine (phosphorylase route): step 1/1. In terms of biological role, catalyzes the reversible phosphorylation of S-methyl-5'-thioadenosine (MTA) to adenine and 5-methylthioribose-1-phosphate. Involved in the breakdown of MTA, a major by-product of polyamine biosynthesis. Responsible for the first step in the methionine salvage pathway after MTA has been generated from S-adenosylmethionine. Has broad substrate specificity with 6-aminopurine nucleosides as preferred substrates. This is S-methyl-5'-thioadenosine phosphorylase from Aspergillus fumigatus (strain ATCC MYA-4609 / CBS 101355 / FGSC A1100 / Af293) (Neosartorya fumigata).